We begin with the raw amino-acid sequence, 513 residues long: ATP synthase subunit alpha (513 aa).

An ATP-binding site is contributed by 169-176; that stretch reads GDRQTGKT.

Belongs to the ATPase alpha/beta chains family. In terms of assembly, F-type ATPases have 2 components, CF(1) - the catalytic core - and CF(0) - the membrane proton channel. CF(1) has five subunits: alpha(3), beta(3), gamma(1), delta(1), epsilon(1). CF(0) has three main subunits: a(1), b(2) and c(9-12). The alpha and beta chains form an alternating ring which encloses part of the gamma chain. CF(1) is attached to CF(0) by a central stalk formed by the gamma and epsilon chains, while a peripheral stalk is formed by the delta and b chains.

It is found in the cell inner membrane. It carries out the reaction ATP + H2O + 4 H(+)(in) = ADP + phosphate + 5 H(+)(out). Its function is as follows. Produces ATP from ADP in the presence of a proton gradient across the membrane. The alpha chain is a regulatory subunit. The chain is ATP synthase subunit alpha from Idiomarina loihiensis (strain ATCC BAA-735 / DSM 15497 / L2-TR).